The following is a 491-amino-acid chain: Zinc finger and SCAN domain-containing protein 22 (491 aa).

The residue at position 9 (serine 9) is a Phosphoserine. The SCAN box domain maps to 49 to 131 (RLRFRHFRYE…VLVEDLTQVL (83 aa)). 2 disordered regions span residues 134-161 (RGWD…SNVT) and 204-249 (FKKT…DKFD). Basic and acidic residues predominate over residues 214-224 (VPTDQRGRESG). Polar residues predominate over residues 225–241 (ASRNSSSAWPNLTSQEK). C2H2-type zinc fingers lie at residues 268 to 290 (SKCR…QKTH), 296 to 318 (YACS…QVVH), 324 to 346 (HECK…QRIH), 352 to 374 (YKCG…QRVH), 380 to 402 (YECD…QRIH), 408 to 430 (YKCD…LRIH), 436 to 458 (YQCK…QRIH), and 464 to 486 (YKCS…LRIH). Residue lysine 443 forms a Glycyl lysine isopeptide (Lys-Gly) (interchain with G-Cter in SUMO2) linkage.

It belongs to the krueppel C2H2-type zinc-finger protein family.

Its subcellular location is the nucleus. May be involved in transcriptional regulation. In Homo sapiens (Human), this protein is Zinc finger and SCAN domain-containing protein 22 (ZSCAN22).